The primary structure comprises 259 residues: Adenosylcobinamide-GDP ribazoletransferase (259 aa).

6 consecutive transmembrane segments (helical) span residues 27–47 (ITFL…ILYI), 51–71 (FSHL…NGLN), 100–120 (VGAG…LSLA), 124–144 (LYIG…SMMI), 175–195 (FLAI…VIVA), and 219–239 (VIGF…IIIA).

It belongs to the CobS family. Mg(2+) serves as cofactor.

Its subcellular location is the cell membrane. The catalysed reaction is alpha-ribazole + adenosylcob(III)inamide-GDP = adenosylcob(III)alamin + GMP + H(+). The enzyme catalyses alpha-ribazole 5'-phosphate + adenosylcob(III)inamide-GDP = adenosylcob(III)alamin 5'-phosphate + GMP + H(+). The protein operates within cofactor biosynthesis; adenosylcobalamin biosynthesis; adenosylcobalamin from cob(II)yrinate a,c-diamide: step 7/7. Functionally, joins adenosylcobinamide-GDP and alpha-ribazole to generate adenosylcobalamin (Ado-cobalamin). Also synthesizes adenosylcobalamin 5'-phosphate from adenosylcobinamide-GDP and alpha-ribazole 5'-phosphate. The protein is Adenosylcobinamide-GDP ribazoletransferase of Thermoplasma volcanium (strain ATCC 51530 / DSM 4299 / JCM 9571 / NBRC 15438 / GSS1).